The following is an 87-amino-acid chain: UPF0473 protein Dred_0776 (87 aa).

This sequence belongs to the UPF0473 family.

The protein is UPF0473 protein Dred_0776 of Desulforamulus reducens (strain ATCC BAA-1160 / DSM 100696 / MI-1) (Desulfotomaculum reducens).